Consider the following 400-residue polypeptide: Mu-type opioid receptor (400 aa).

Residues 1–68 (MDSSAVPTNA…CPPTGSPSMI (68 aa)) lie on the Extracellular side of the membrane. N-linked (GlcNAc...) asparagine glycans are attached at residues Asn-9, Asn-12, Asn-33, Asn-40, and Asn-48. The chain crosses the membrane as a helical span at residues 69-93 (TAITIMALYSIVCVVGLFGNFLVMY). Residues 94 to 106 (VIVRYTKMKTATN) are Cytoplasmic-facing. The chain crosses the membrane as a helical span at residues 107–131 (IYIFNLALADALVTSTLPFQSVNYL). The Extracellular segment spans residues 132–142 (MGTWPFGTILC). Cys-142 and Cys-219 are disulfide-bonded. Residues 143 to 165 (KIVISIDYYNMSTSIFTLCTMSV) form a helical membrane-spanning segment. Residues 166-185 (DRYIAVCHPVKALDFRTPRN) lie on the Cytoplasmic side of the membrane. Tyr-168 carries the post-translational modification Phosphotyrosine. The helical transmembrane segment at 186 to 207 (AKIINVCNWILSSAIGLPVMFM) threads the bilayer. The Extracellular portion of the chain corresponds to 208–230 (ATTKYRQGSIDCTLTFSHPSWYW). Residues 231 to 255 (ENLLKICVFIFAFIMPVLIITVCYG) form a helical membrane-spanning segment. Topologically, residues 256–283 (LMILRLKSVRMLSGSKEKDRNLRRITRM) are cytoplasmic. The chain crosses the membrane as a helical span at residues 284 to 306 (VLVVVAVFIICWTPIHIYVIIKA). Residues 307 to 314 (LVTIPETT) are Extracellular-facing. A helical transmembrane segment spans residues 315 to 338 (FQTVSWHFCIALGYTNSCLNPVLY). The short motif at 334–338 (NPVLY) is the NPxxY; plays a role in stabilizing the activated conformation of the receptor element. Over 339–400 (AFLDEDFKRC…NLEAETAPLP (62 aa)) the chain is Cytoplasmic. The S-palmitoyl cysteine moiety is linked to residue Cys-353. A disordered region spans residues 364–386 (NSTRIRQNTRDHPSTANTVDRTN). Ser-365 carries the post-translational modification Phosphoserine. A Phosphothreonine modification is found at Thr-372. Phosphoserine is present on Ser-377. Phosphothreonine is present on Thr-396.

Belongs to the G-protein coupled receptor 1 family. As to quaternary structure, forms homooligomers and heterooligomers with other GPCRs, such as OPRD1, OPRK1, OPRL1, NPFFR2, ADRA2A, SSTR2, CNR1 and CCR5 (probably in dimeric forms). Interacts with heterotrimeric G proteins; interaction with a heterotrimeric complex containing GNAI1, GNB1 and GNG2 stabilizes the active conformation of the receptor and increases its affinity for endomorphin-2, the synthetic opioid peptide DAMGO and for morphinan agonists. Interacts with PPL; the interaction disrupts agonist-mediated G-protein activation. Interacts (via C-terminus) with DNAJB4 (via C-terminus). Interacts with calmodulin; the interaction inhibits the constitutive activity of OPRM1; it abolishes basal and attenuates agonist-stimulated G-protein coupling. Interacts with FLNA, PLD2, RANBP9 and WLS and GPM6A. Interacts with RTP4. Interacts with SYP and GNAS. Interacts with RGS9, RGS17, RGS20, RGS4, PPP1R9B and HINT1. In terms of processing, phosphorylated. Differentially phosphorylated in basal and agonist-induced conditions. Agonist-mediated phosphorylation modulates receptor internalization. Phosphorylated by GRK2 in a agonist-dependent manner. Phosphorylation at Tyr-168 requires receptor activation, is dependent on non-receptor protein tyrosine kinase Src and results in a decrease in agonist efficacy by reducing G-protein coupling efficiency. Phosphorylated on tyrosine residues; the phosphorylation is involved in agonist-induced G-protein-independent receptor down-regulation. Phosphorylation at Ser-377 is involved in G-protein-dependent but not beta-arrestin-dependent activation of the ERK pathway. Post-translationally, ubiquitinated. A basal ubiquitination seems not to be related to degradation. Ubiquitination is increased upon formation of OPRM1:OPRD1 oligomers leading to proteasomal degradation; the ubiquitination is diminished by RTP4.

It localises to the cell membrane. The protein localises to the cell projection. The protein resides in the axon. Its subcellular location is the perikaryon. It is found in the dendrite. It localises to the endosome. Receptor for endogenous opioids such as beta-endorphin and endomorphin. Receptor for natural and synthetic opioids including morphine, heroin, DAMGO, fentanyl, etorphine, buprenorphin and methadone. Also activated by enkephalin peptides, such as Met-enkephalin or Met-enkephalin-Arg-Phe, with higher affinity for Met-enkephalin-Arg-Phe. Agonist binding to the receptor induces coupling to an inactive GDP-bound heterotrimeric G-protein complex and subsequent exchange of GDP for GTP in the G-protein alpha subunit leading to dissociation of the G-protein complex with the free GTP-bound G-protein alpha and the G-protein beta-gamma dimer activating downstream cellular effectors. The agonist- and cell type-specific activity is predominantly coupled to pertussis toxin-sensitive G(i) and G(o) G alpha proteins, GNAI1, GNAI2, GNAI3 and GNAO1, and to a lesser extent to pertussis toxin-insensitive G alpha proteins GNAZ and GNA15. They mediate an array of downstream cellular responses, including inhibition of adenylate cyclase activity and both N-type and L-type calcium channels, activation of inward rectifying potassium channels, mitogen-activated protein kinase (MAPK), phospholipase C (PLC), phosphoinositide/protein kinase (PKC), phosphoinositide 3-kinase (PI3K) and regulation of NF-kappa-B. Also couples to adenylate cyclase stimulatory G alpha proteins. The selective temporal coupling to G-proteins and subsequent signaling can be regulated by RGSZ proteins, such as RGS9, RGS17 and RGS4. Phosphorylation by members of the GPRK subfamily of Ser/Thr protein kinases and association with beta-arrestins is involved in short-term receptor desensitization. Beta-arrestins associate with the GPRK-phosphorylated receptor and uncouple it from the G-protein thus terminating signal transduction. The phosphorylated receptor is internalized through endocytosis via clathrin-coated pits which involves beta-arrestins. The activation of the ERK pathway occurs either in a G-protein-dependent or a beta-arrestin-dependent manner and is regulated by agonist-specific receptor phosphorylation. Acts as a class A G-protein coupled receptor (GPCR) which dissociates from beta-arrestin at or near the plasma membrane and undergoes rapid recycling. Receptor down-regulation pathways are varying with the agonist and occur dependent or independent of G-protein coupling. Endogenous ligands induce rapid desensitization, endocytosis and recycling. Heterooligomerization with other GPCRs can modulate agonist binding, signaling and trafficking properties. Involved in neurogenesis. This is Mu-type opioid receptor (OPRM1) from Macaca mulatta (Rhesus macaque).